The chain runs to 526 residues: PTS system alpha-glucoside-specific EIICB component (526 aa).

The region spanning 1 to 417 (MLKHFQRLGG…YNVKTSGRED (417 aa)) is the PTS EIIC type-1 domain. Helical transmembrane passes span 12–32 (LFAP…TIIL), 59–79 (GWTV…IGLA), 88–108 (LAVL…LTFW), 132–152 (IKTL…TIYI), 173–193 (LVSA…CLVW), 200–220 (ISSL…LYTF), 224–244 (ILIP…GPAV), 274–294 (GGFA…ALAM), 305–325 (IVSG…ITEP), 330–350 (FLFI…TMAA), 355–375 (FGVV…WLPL), and 381–401 (GVMF…YLVF). The region spanning 447–526 (SGKAKAFLEA…ESFENLMEQN (80 aa)) is the PTS EIIB type-1 domain. The active-site Phosphocysteine intermediate; for EIIB activity is Cys469.

It is found in the cell membrane. Functionally, the phosphoenolpyruvate-dependent sugar phosphotransferase system (sugar PTS), a major carbohydrate active -transport system, catalyzes the phosphorylation of incoming sugar substrates concomitantly with their translocation across the cell membrane. This system is involved in alpha-glucoside transport. This is PTS system alpha-glucoside-specific EIICB component (malB) from Fusobacterium mortiferum.